A 212-amino-acid chain; its full sequence is Uridine kinase (212 aa).

13 to 20 serves as a coordination point for ATP; that stretch reads GASASGKS.

Belongs to the uridine kinase family.

The protein resides in the cytoplasm. The enzyme catalyses uridine + ATP = UMP + ADP + H(+). It carries out the reaction cytidine + ATP = CMP + ADP + H(+). The protein operates within pyrimidine metabolism; CTP biosynthesis via salvage pathway; CTP from cytidine: step 1/3. Its pathway is pyrimidine metabolism; UMP biosynthesis via salvage pathway; UMP from uridine: step 1/1. The chain is Uridine kinase from Shewanella oneidensis (strain ATCC 700550 / JCM 31522 / CIP 106686 / LMG 19005 / NCIMB 14063 / MR-1).